The sequence spans 876 residues: Valine--tRNA ligase (876 aa).

The short motif at 44 to 54 is the 'HIGH' region element; it reads PNVTGKLHLGH. A 'KMSKS' region motif is present at residues 520–524; sequence KMSKS. ATP is bound at residue Lys523. Positions 805–876 form a coiled coil; that stretch reads LEGLIDMDKE…VKNRIEQLKA (72 aa).

It belongs to the class-I aminoacyl-tRNA synthetase family. ValS type 1 subfamily. Monomer.

It localises to the cytoplasm. The enzyme catalyses tRNA(Val) + L-valine + ATP = L-valyl-tRNA(Val) + AMP + diphosphate. In terms of biological role, catalyzes the attachment of valine to tRNA(Val). As ValRS can inadvertently accommodate and process structurally similar amino acids such as threonine, to avoid such errors, it has a 'posttransfer' editing activity that hydrolyzes mischarged Thr-tRNA(Val) in a tRNA-dependent manner. The polypeptide is Valine--tRNA ligase (Staphylococcus haemolyticus (strain JCSC1435)).